We begin with the raw amino-acid sequence, 1516 residues long: AP-4 complex accessory subunit RUSC2 (1516 aa).

Disordered stretches follow at residues alanine 33–leucine 105, leucine 202–serine 224, tryptophan 229–glutamine 248, serine 331–cysteine 351, leucine 404–tyrosine 445, and glycine 478–leucine 511. The span at leucine 66–isoleucine 81 shows a compositional bias: polar residues. The segment covering aspartate 82–arginine 92 has biased composition (basic and acidic residues). Over residues glycine 206–alanine 217 the composition is skewed to gly residues. Residues methionine 333 to glycine 344 show a composition bias toward basic and acidic residues. The span at serine 405 to cysteine 420 shows a compositional bias: low complexity. Over residues serine 428–serine 440 the composition is skewed to pro residues. A compositionally biased stretch (polar residues) spans valine 480–arginine 493. Phosphoserine is present on residues serine 536, serine 543, and serine 559. 4 disordered regions span residues glycine 550–aspartate 588, leucine 646–arginine 688, arginine 727–glutamate 836, and glutamate 868–leucine 889. Polar residues predominate over residues glycine 567–alanine 579. Serine 656 carries the phosphoserine modification. Low complexity predominate over residues glutamine 729 to proline 746. Serine 781 is modified (phosphoserine). The segment covering proline 791–cysteine 801 has biased composition (low complexity). In terms of domain architecture, RUN spans asparagine 1031–glutamine 1175. Disordered regions lie at residues arginine 1210 to arginine 1261, isoleucine 1286 to aspartate 1408, and glutamine 1422 to proline 1449. A compositionally biased stretch (basic and acidic residues) spans aspartate 1219 to lysine 1230. A compositionally biased stretch (acidic residues) spans glycine 1237 to alanine 1251. Residues glutamate 1355–glycine 1364 are compositionally biased toward basic and acidic residues. Phosphoserine occurs at positions 1368 and 1380. Residues serine 1426–glutamine 1437 are compositionally biased toward basic and acidic residues. Residues serine 1447–threonine 1506 enclose the SH3 domain.

As to quaternary structure, associated component of the adapter-like complex 4 (AP-4). Interacts with active RAB1A and RAB1B, and with GOLGA2. Interacts (via RUN domain) with RAB35 (GTP-bound form); the interaction recruits RUSC2 to the plasma membrane. Widely expressed, with highest levels in brain and testis.

The protein localises to the cytoplasm. It localises to the cytosol. The protein resides in the cell membrane. Its function is as follows. Associates with the adapter-like complex 4 (AP-4) and may therefore play a role in vesicular trafficking of proteins at the trans-Golgi network. This Homo sapiens (Human) protein is AP-4 complex accessory subunit RUSC2.